We begin with the raw amino-acid sequence, 2896 residues long: Protein PRRC2C (2896 aa).

Position 27 is an N6-acetyllysine (Lys-27). The disordered stretch occupies residues 28–212 (GKSLETQKTT…STAGTSEQND (185 aa)). Residues 88–97 (QEQHEEEKTP) are compositionally biased toward basic and acidic residues. Residues 105 to 119 (KPGVAAPPEVAPAPK) show a composition bias toward low complexity. The segment covering 134–144 (QVNSQFQQEFP) has biased composition (polar residues). Basic and acidic residues predominate over residues 151–160 (DQEKKEKETN). A phosphoserine mark is found at Ser-187 and Ser-191. Residues 201–211 (DESTAGTSEQN) show a composition bias toward polar residues. Arg-242 is modified (asymmetric dimethylarginine; alternate). Omega-N-methylarginine; alternate is present on Arg-242. Asymmetric dimethylarginine is present on residues Arg-255 and Arg-266. 2 disordered regions span residues 264–729 (PMRF…QHLA) and 750–788 (SGRP…SFEH). Residues Arg-279 and Arg-281 each carry the omega-N-methylarginine modification. Over residues 301–310 (ELKELDKFDN) the composition is skewed to basic and acidic residues. Ser-335 is modified (phosphoserine). A compositionally biased stretch (polar residues) spans 341-358 (GSNSPKENNSEDQGSKAS). The segment covering 359-368 (ENNENKKETD) has biased composition (basic and acidic residues). Residues 370-381 (VSNTKSSSQIPA) are compositionally biased toward polar residues. An N6-acetyllysine modification is found at Lys-392. Ser-395 and Ser-500 each carry phosphoserine. Over residues 395 to 405 (SFNQERGTSSH) the composition is skewed to polar residues. The segment covering 465 to 648 (RREEEERRME…EATPVVHETE (184 aa)) has biased composition (basic and acidic residues). The segment covering 676-708 (QRQQEQMKQQQWQQQQQQGVLPQTVPSQPSSST) has biased composition (low complexity). The segment covering 759–769 (PIHPGMIPPKP) has biased composition (pro residues). Ser-779, Ser-785, and Ser-801 each carry phosphoserine. Residues 804 to 1118 (RMLWGSDPYP…PVSTVQVEPA (315 aa)) are disordered. 3 stretches are compositionally biased toward basic and acidic residues: residues 825-836 (ATEEPEDVRSEA), 852-867 (NQLE…RESS), and 878-888 (SVEDVRPHHTD). Phosphoserine is present on residues Ser-867, Ser-878, Ser-920, and Ser-929. 3 stretches are compositionally biased toward basic and acidic residues: residues 954 to 993 (IDSK…ETRW), 1000 to 1010 (NRREEVNDRPV), and 1020 to 1058 (VLRD…KKDL). A coiled-coil region spans residues 1020 to 1046 (VLRDMKEEREQRKEKEGEKAEKVTEKV). Residues 1059–1081 (PPPPPPPQPPAPIQPQSVPPPIQ) show a composition bias toward pro residues. The segment covering 1089–1100 (STETATLAQKPS) has biased composition (polar residues). Lys-1133 participates in a covalent cross-link: Glycyl lysine isopeptide (Lys-Gly) (interchain with G-Cter in SUMO2). Composition is skewed to basic and acidic residues over residues 1143-1163 (SKDL…KKES), 1170-1180 (YWKEARERDWF), 1214-1230 (HTRD…RAEH), and 1237-1248 (RQREESETRSES). 8 disordered regions span residues 1143–1647 (SKDL…DALS), 1670–1785 (EDPQ…SAPV), 1905–1991 (APAS…TAEL), 2005–2164 (ISKK…VSEM), 2218–2238 (LPNT…SLTS), 2257–2290 (WENS…GPST), 2317–2341 (GAGT…NICK), and 2668–2701 (DIKP…QSSK). Residues Ser-1242, Ser-1246, Ser-1248, Ser-1249, and Ser-1263 each carry the phosphoserine modification. Basic and acidic residues-rich tracts occupy residues 1261–1297 (RGSE…ENKK), 1305–1330 (FKPD…DKAK), 1381–1418 (EVPK…PARE), and 1429–1446 (PRQD…REAA). A phosphothreonine mark is found at Thr-1265 and Thr-1267. 2 stretches are compositionally biased toward polar residues: residues 1457–1469 (TNGT…QEPV) and 1477–1491 (GNKT…SSDQ). Positions 1505–1517 (FNERRERDEKKNA) are enriched in basic and acidic residues. At Ser-1544 the chain carries Phosphoserine. Composition is skewed to basic and acidic residues over residues 1620-1634 (NSKD…DPKP) and 1692-1704 (RLQD…KEEQ). Positions 1682–1717 (TEVVSKKQQKRLQDEERRKKEEQVIQVWNKKNANEK) form a coiled coil. Over residues 1742 to 1785 (SSASVPPLASAPLPPSTSASVPASTSAPLPATLTPVPASTSAPV) the composition is skewed to low complexity. Residues 1913 to 1929 (APAPTPVSAPNPAPPAP) show a composition bias toward pro residues. Residues 1943–1952 (PLQTTSQSSK) are compositionally biased toward low complexity. The residue at position 1965 (Thr-1965) is a Phosphothreonine. Residues 1976–1986 (KSIQTPQSHGT) show a composition bias toward polar residues. 2 positions are modified to phosphoserine: Ser-1983 and Ser-2013. The segment covering 2019–2035 (SVSAWNKPLTSFGSAPS) has biased composition (polar residues). Over residues 2075 to 2088 (KSADKIPEPKEQRQ) the composition is skewed to basic and acidic residues. Residue Ser-2105 is modified to Phosphoserine. Residues 2108 to 2132 (ENKEHKPGPIGKERSLKNRKVKDAQ) show a composition bias toward basic and acidic residues. Ser-2143 is modified (phosphoserine). Basic and acidic residues predominate over residues 2257 to 2267 (WENSPNVREKG). A Phosphoserine modification is found at Ser-2260. The segment covering 2269 to 2290 (PVTSTAPPIATGVSSSASGPST) has biased composition (polar residues). Low complexity predominate over residues 2320–2334 (TYTTSSLSTKSTTTS). Thr-2673 and Thr-2682 each carry phosphothreonine. The segment covering 2679–2701 (RSTTPTSSPFRATSTSPNSQSSK) has biased composition (polar residues). A phosphoserine mark is found at Ser-2686 and Ser-2694. Arg-2814 is modified (omega-N-methylarginine). Asymmetric dimethylarginine; alternate is present on Arg-2823. Arg-2823 bears the Omega-N-methylarginine; alternate mark. Polar residues predominate over residues 2824–2833 (FFSEQQQSKQ). Residues 2824–2896 (FFSEQQQSKQ…QAIKTEETKS (73 aa)) are disordered.

In terms of tissue distribution, overexpressed in bladder cancer.

The protein localises to the cytoplasm. It localises to the stress granule. Functionally, required for efficient formation of stress granules. This is Protein PRRC2C from Homo sapiens (Human).